A 198-amino-acid chain; its full sequence is Tumor necrosis factor receptor superfamily member 22 (198 aa).

The Cytoplasmic segment spans residues 1–20; the sequence is MFGFFCSLVSSLSRWFLWRR. A helical; Signal-anchor for type II membrane protein membrane pass occupies residues 21 to 41; that stretch reads LLLLLLLLLLNLPLQVKFAML. Residues 42–198 lie on the Extracellular side of the membrane; the sequence is ELHSFKCPAG…SVVVFRIIRR (157 aa). 3 TNFR-Cys repeats span residues 47-82, 84-124, and 125-165; these read KCPA…QGQC, KCHP…DRKC, and QCRT…NTVC. Disulfide bonds link Cys-48-Cys-59, Cys-60-Cys-73, Cys-63-Cys-82, Cys-85-Cys-100, Cys-103-Cys-116, Cys-106-Cys-124, Cys-126-Cys-141, Cys-144-Cys-157, and Cys-147-Cys-165. N-linked (GlcNAc...) asparagine glycosylation occurs at Asn-62. Asn-158 is a glycosylation site (N-linked (GlcNAc...) asparagine).

As to expression, ubiquitous.

Its subcellular location is the cell membrane. It is found in the secreted. Receptor for the cytotoxic ligand TNFSF10/TRAIL. Lacks a cytoplasmic death domain and hence is not capable of inducing apoptosis. Protects cells against TRAIL mediated apoptosis possibly through ligand competition. Cannot induce the NF-kappa-B pathway. The polypeptide is Tumor necrosis factor receptor superfamily member 22 (Tnfrsf22) (Mus musculus (Mouse)).